Consider the following 235-residue polypeptide: RNA-free ribonuclease P (235 aa).

This sequence belongs to the HARP family.

The enzyme catalyses Endonucleolytic cleavage of RNA, removing 5'-extranucleotides from tRNA precursor.. Functionally, RNA-free RNase P that catalyzes the removal of the 5'-leader sequence from pre-tRNA to produce the mature 5'-terminus. In Methanothrix thermoacetophila (strain DSM 6194 / JCM 14653 / NBRC 101360 / PT) (Methanosaeta thermophila), this protein is RNA-free ribonuclease P.